We begin with the raw amino-acid sequence, 145 residues long: Protein SprT-like (145 aa).

Positions 5–141 (DYVREVSLAD…CGRCHGRLIK (137 aa)) constitute a SprT-like domain. A Zn(2+)-binding site is contributed by His-64. Glu-65 is an active-site residue. His-68 contacts Zn(2+).

The protein belongs to the SprT family. Requires Zn(2+) as cofactor.

Its subcellular location is the cytoplasm. This chain is Protein SprT-like, found in Streptococcus equi subsp. zooepidemicus (strain H70).